The chain runs to 90 residues: UPF0297 protein Cthe_0151 (90 aa).

The protein belongs to the UPF0297 family.

The chain is UPF0297 protein Cthe_0151 from Acetivibrio thermocellus (strain ATCC 27405 / DSM 1237 / JCM 9322 / NBRC 103400 / NCIMB 10682 / NRRL B-4536 / VPI 7372) (Clostridium thermocellum).